The sequence spans 244 residues: 5-oxoprolinase subunit A (244 aa).

The protein belongs to the LamB/PxpA family. As to quaternary structure, forms a complex composed of PxpA, PxpB and PxpC.

It catalyses the reaction 5-oxo-L-proline + ATP + 2 H2O = L-glutamate + ADP + phosphate + H(+). Catalyzes the cleavage of 5-oxoproline to form L-glutamate coupled to the hydrolysis of ATP to ADP and inorganic phosphate. The protein is 5-oxoprolinase subunit A of Escherichia coli O7:K1 (strain IAI39 / ExPEC).